A 337-amino-acid chain; its full sequence is DNA-directed RNA polymerase subunit alpha (337 aa).

An alpha N-terminal domain (alpha-NTD) region spans residues 1-233; that stretch reads MVREEIAEST…DLFVPFLHAE (233 aa). The tract at residues 266 to 337 is alpha C-terminal domain (alpha-CTD); that stretch reads GIPLKYIFID…FAVDLPKVLI (72 aa).

It belongs to the RNA polymerase alpha chain family. As to quaternary structure, in plastids the minimal PEP RNA polymerase catalytic core is composed of four subunits: alpha, beta, beta', and beta''. When a (nuclear-encoded) sigma factor is associated with the core the holoenzyme is formed, which can initiate transcription.

Its subcellular location is the plastid. The protein localises to the chloroplast. The catalysed reaction is RNA(n) + a ribonucleoside 5'-triphosphate = RNA(n+1) + diphosphate. DNA-dependent RNA polymerase catalyzes the transcription of DNA into RNA using the four ribonucleoside triphosphates as substrates. The protein is DNA-directed RNA polymerase subunit alpha of Dioscorea elephantipes (Elephant's foot yam).